A 317-amino-acid chain; its full sequence is UV DNA damage endonuclease (317 aa).

The protein belongs to the uve1/UvsE family.

Functionally, component in a DNA repair pathway. Removal of UV LIGHT damaged nucleotides. Recognizes pyrimidine dimers and cleave a phosphodiester bond immediately 5' to the lesion. This is UV DNA damage endonuclease from Bacillus cereus (strain B4264).